The sequence spans 273 residues: HMP-PP phosphatase (273 aa).

Asp-8 acts as the Nucleophile in catalysis. Residues Asp-8, Asp-10, and Asp-212 each coordinate Mg(2+).

Belongs to the HAD-like hydrolase superfamily. Cof family. The cofactor is Mg(2+).

The enzyme catalyses 4-amino-2-methyl-5-(diphosphooxymethyl)pyrimidine + H2O = 4-amino-2-methyl-5-(phosphooxymethyl)pyrimidine + phosphate + H(+). In terms of biological role, catalyzes the hydrolysis of 4-amino-2-methyl-5-hydroxymethylpyrimidine pyrophosphate (HMP-PP) to 4-amino-2-methyl-5-hydroxymethylpyrimidine phosphate (HMP-P). The chain is HMP-PP phosphatase from Yersinia pseudotuberculosis serotype IB (strain PB1/+).